A 306-amino-acid chain; its full sequence is Large ribosomal subunit protein uL18 (306 aa).

This sequence belongs to the universal ribosomal protein uL18 family. As to quaternary structure, component of the large ribosomal subunit (LSU).

The protein localises to the cytoplasm. Its subcellular location is the nucleus. Component of the ribosome, a large ribonucleoprotein complex responsible for the synthesis of proteins in the cell. The small ribosomal subunit (SSU) binds messenger RNAs (mRNAs) and translates the encoded message by selecting cognate aminoacyl-transfer RNA (tRNA) molecules. The large subunit (LSU) contains the ribosomal catalytic site termed the peptidyl transferase center (PTC), which catalyzes the formation of peptide bonds, thereby polymerizing the amino acids delivered by tRNAs into a polypeptide chain. The nascent polypeptides leave the ribosome through a tunnel in the LSU and interact with protein factors that function in enzymatic processing, targeting, and the membrane insertion of nascent chains at the exit of the ribosomal tunnel. The chain is Large ribosomal subunit protein uL18 (RPL5) from Theileria annulata.